A 1396-amino-acid polypeptide reads, in one-letter code: DNA-directed RNA polymerase subunit beta' (1396 aa).

4 residues coordinate Zn(2+): cysteine 70, cysteine 72, cysteine 85, and cysteine 88. The Mg(2+) site is built by aspartate 460, aspartate 462, and aspartate 464. Cysteine 807, cysteine 881, cysteine 888, and cysteine 891 together coordinate Zn(2+). The segment covering 1361–1378 has biased composition (acidic residues); sequence EPEEIEEPVPEDLEDETA. The segment at 1361-1396 is disordered; that stretch reads EPEEIEEPVPEDLEDETAGADSAQAASEESVAEGKD. A compositionally biased stretch (low complexity) spans 1379–1389; sequence GADSAQAASEE.

Belongs to the RNA polymerase beta' chain family. The RNAP catalytic core consists of 2 alpha, 1 beta, 1 beta' and 1 omega subunit. When a sigma factor is associated with the core the holoenzyme is formed, which can initiate transcription. Requires Mg(2+) as cofactor. Zn(2+) is required as a cofactor.

The catalysed reaction is RNA(n) + a ribonucleoside 5'-triphosphate = RNA(n+1) + diphosphate. DNA-dependent RNA polymerase catalyzes the transcription of DNA into RNA using the four ribonucleoside triphosphates as substrates. The protein is DNA-directed RNA polymerase subunit beta' of Syntrophotalea carbinolica (strain DSM 2380 / NBRC 103641 / GraBd1) (Pelobacter carbinolicus).